The chain runs to 443 residues: Tol-Pal system protein TolB (443 aa).

The signal sequence occupies residues 1-33 (MKIGIINTKIRTVFSAFACMIAASLVCTMPARA).

The protein belongs to the TolB family. As to quaternary structure, the Tol-Pal system is composed of five core proteins: the inner membrane proteins TolA, TolQ and TolR, the periplasmic protein TolB and the outer membrane protein Pal. They form a network linking the inner and outer membranes and the peptidoglycan layer.

It is found in the periplasm. Part of the Tol-Pal system, which plays a role in outer membrane invagination during cell division and is important for maintaining outer membrane integrity. This Brucella anthropi (strain ATCC 49188 / DSM 6882 / CCUG 24695 / JCM 21032 / LMG 3331 / NBRC 15819 / NCTC 12168 / Alc 37) (Ochrobactrum anthropi) protein is Tol-Pal system protein TolB.